The chain runs to 63 residues: Arabinogalactan protein 41 (63 aa).

Positions 1–27 are cleaved as a signal peptide; that stretch reads MSGSRLFFGVSTIVSIIFAILLPMAHA. Gln28 is modified (pyrrolidone carboxylic acid). A 4-hydroxyproline mark is found at Pro32, Pro34, and Pro36. Pro32, Pro34, and Pro36 each carry an O-linked (Ara...) hydroxyproline glycan. The GPI-anchor amidated serine moiety is linked to residue Ser38. The propeptide at 39–63 is removed in mature form; the sequence is DGTTIDQGIAYVLMLVALVLTYLIH.

Belongs to the AG-peptide AGP family. Post-translationally, contains 4-hydroxyproline; hydroxylated on Pro-32, Pro-34 and Pro-36. In terms of processing, O-glycosylated on hydroxyprolines; noncontiguous hydroxylproline residues are glycosylated with arabinogalactan.

Its subcellular location is the cell membrane. Proteoglycan that seems to be implicated in diverse developmental roles such as differentiation, cell-cell recognition, embryogenesis and programmed cell death. This Arabidopsis thaliana (Mouse-ear cress) protein is Arabinogalactan protein 41.